The chain runs to 581 residues: MRLFNQLKWYFIKEWKRYLGSIILLIIIAFLQLLPPKIIGILIDLIIKEKMSGFEILPWISIILLIAIIVYILRYLWRILLFGASYQLATELRVKFYSYLSKQSEIFFLKNRTGDLIARATNDVDRVVFAAGEGVLTLVDSSVMGISVLIVMITQISWLLTIISLIPMPIMAILIKKYGKKLHDTFRNAQSAFSLLNNQTQEILTSIRMIRAFGLEKNQLKKFNNIVNDTGKKNMEVAEIDARFDPVIYLSVAFSNLLAITAGGWLVWNNTITIGKLTSFIMYLGLMIWPMLALAWMFNIVERGSAAWDRIHSIINQNLYIEDGKKTIINMNGKLNINIDMFFYPKNKKPSLKNIYLSLNPGKTLGICGPTGAGKSTLLKLIQRQFKIHKGEILYNSSSLLELKIDYWRSKIGVVNQTSFLFSDSISNNISLGKPKASQKEIEKAAKLADIHKDIVCLPQGYNTQVGERGVMLSGGQKQRIAIARALLLNTEILILDDALSAVDGKTENNILKNLKKWKDKGYSLIIVAHRLSALIHADEIIVIKEGTIIQRGNHEKLIKEKNWYKSMYDHQKIQTEIENF.

In terms of domain architecture, ABC transmembrane type-1 spans 18-303 (YLGSIILLII…LAWMFNIVER (286 aa)). 6 helical membrane passes run 23–43 (ILLIIIAFLQLLPPKIIGILI), 53–73 (GFEILPWISIILLIAIIVYIL), 127–149 (VVFAAGEGVLTLVDSSVMGISVL), 153–175 (ITQISWLLTIISLIPMPIMAILI), 247–267 (VIYLSVAFSNLLAITAGGWLV), and 280–300 (FIMYLGLMIWPMLALAWMFNI). Residues 337–571 (INIDMFFYPK…KNWYKSMYDH (235 aa)) enclose the ABC transporter domain. 369 to 376 (GPTGAGKS) is a binding site for ATP.

The protein belongs to the ABC transporter superfamily. Drug exporter-2 (TC 3.A.1.117) family.

It is found in the cell membrane. The catalysed reaction is ATP + H2O + xenobioticSide 1 = ADP + phosphate + xenobioticSide 2.. The sequence is that of Multidrug resistance-like ATP-binding protein MdlA (mdlA) from Buchnera aphidicola subsp. Schizaphis graminum (strain Sg).